A 995-amino-acid chain; its full sequence is MSSLPRRAKVQVQDVVLKDEFSSFSELSSASEEDDKEDSAWEPQKKVPRSRKQPPPKESKPKRMPRVKKNAPQISDGSEVVVVKEELNSSVAIADTALEDRKNKLDTVQTLKTAKTKQKCAAQPHTVRRTKKLKVEEETSKASNLEGESNSSETPSTSTVWGGTCKKEENDDDFTFGQSALKKIKTETYPQGQPVKFPANANSTKEEVEMNWDMVQVLSERTNIEPWVCANIIRLFNDDNTIPFIIRYRKELINNLDADSLREVQQTLEELRAVAKKVHSTIQKIKKEGKMSECLLKAMLNCKTFEELEHVSAPYKTGSKGTKAQRARQLGLEGAARALLEKPGELSLLSYIRPDVKGLSTLQDIEIGVQHILADMIAKDKDTLDFIRNLCQKRHVCIQSSLAKVSSKKVNEKDVDKFLLYQHFSCNIRNIHHHQILAINRGENLKVLTVKVNISDGVKDEFCRWCIQNRWRPRSFARPELMKILYNSLNDSFKRLIYPLLCREFRAKLTSDAEKESVMMFGRNLRQLLLTSPVPGRTLMGVDPGYKHGCKLAIISPTSQILHTDVVYLHCGQGFREAEKIKTLLLNFNCSTVVIGNGTACRETEAYFADLIMKNYFAPLDVVYCIVSEAGASIYSVSPEANKEMPGLDPNLRSAVSIARRVQDPLAELVKIEPKHIGVGMYQHDVSQTLLKATLDSVVEECVSFVGVDINICSEVLLRHIAGLNANRAKNIIEWREKNGPFINREQLKKVKGLGPKSFQQCAGFIRINQDYIRTFCSQQTETSGQIQGVAVTSSADVEVTNEKQGKKKSKTAVNVLLKPNPLDQTCIHPESYDIAMRFLSSIGGTLYEVGKPEMQQKINSFLEKEGMEKIAERLQTTVHTLQVIIDGLSQPESFDFRTDFDKPDFKRSIVCLEDLQIGTVLTGKVENATLFGIFVDIGVGKSGLIPIRNVTEAKLSKTKKRRSLGLGPGERVEVQVLNIDIPRSRITLDLIRVL.

The interval Ser-23–Val-81 is disordered. Glycyl lysine isopeptide (Lys-Gly) (interchain with G-Cter in SUMO2) cross-links involve residues Lys-84 and Lys-134. The interval Cys-120–Cys-165 is disordered. Residues Glu-146–Thr-159 are compositionally biased toward low complexity. Residues Lys-166, Lys-167, and Lys-183 each participate in a glycyl lysine isopeptide (Lys-Gly) (interchain with G-Cter in SUMO2) cross-link. Residue Lys-185 forms a Glycyl lysine isopeptide (Lys-Gly) (interchain with G-Cter in SUMO1); alternate linkage. Lys-185 is covalently cross-linked (Glycyl lysine isopeptide (Lys-Gly) (interchain with G-Cter in SUMO2); alternate). Positions Ala-258–Glu-288 form a coiled coil. The residue at position 861 (Ser-861) is a Phosphoserine. Residues Gly-919 to Ile-992 form the S1 motif domain. Lys-955 is covalently cross-linked (Glycyl lysine isopeptide (Lys-Gly) (interchain with G-Cter in SUMO2)). The residue at position 964 (Ser-964) is a Phosphoserine.

The chain is S1 RNA-binding domain-containing protein 1 (SRBD1) from Homo sapiens (Human).